The primary structure comprises 254 residues: Acetylglutamate kinase (254 aa).

Substrate is bound by residues 40–41 (GG), R62, and N154.

It belongs to the acetylglutamate kinase family. ArgB subfamily.

Its subcellular location is the cytoplasm. The catalysed reaction is N-acetyl-L-glutamate + ATP = N-acetyl-L-glutamyl 5-phosphate + ADP. Its pathway is amino-acid biosynthesis; L-arginine biosynthesis; N(2)-acetyl-L-ornithine from L-glutamate: step 2/4. Catalyzes the ATP-dependent phosphorylation of N-acetyl-L-glutamate. This chain is Acetylglutamate kinase, found in Staphylococcus aureus (strain Mu3 / ATCC 700698).